The following is a 312-amino-acid chain: Ribosomal protein L11 methyltransferase (312 aa).

Residues threonine 160, glycine 181, aspartate 203, and asparagine 246 each contribute to the S-adenosyl-L-methionine site.

This sequence belongs to the methyltransferase superfamily. PrmA family.

Its subcellular location is the cytoplasm. It catalyses the reaction L-lysyl-[protein] + 3 S-adenosyl-L-methionine = N(6),N(6),N(6)-trimethyl-L-lysyl-[protein] + 3 S-adenosyl-L-homocysteine + 3 H(+). Functionally, methylates ribosomal protein L11. This is Ribosomal protein L11 methyltransferase from Staphylococcus carnosus (strain TM300).